The primary structure comprises 231 residues: Putative N-acetylmannosamine-6-phosphate 2-epimerase (231 aa).

Belongs to the NanE family.

It catalyses the reaction an N-acyl-D-glucosamine 6-phosphate = an N-acyl-D-mannosamine 6-phosphate. It functions in the pathway amino-sugar metabolism; N-acetylneuraminate degradation; D-fructose 6-phosphate from N-acetylneuraminate: step 3/5. In terms of biological role, converts N-acetylmannosamine-6-phosphate (ManNAc-6-P) to N-acetylglucosamine-6-phosphate (GlcNAc-6-P). This is Putative N-acetylmannosamine-6-phosphate 2-epimerase from Glaesserella parasuis serovar 5 (strain SH0165) (Haemophilus parasuis).